A 554-amino-acid polypeptide reads, in one-letter code: MSFRDLRECIDSERGMEDVGLAAGRSQREKKRSYKDLLREEEEIAEQVRKSSKKRSRELDLFLASESHKKKKKHLTDDYHADTPSPDLAKKKKKALLPSPAPPSSSDTAMDLLKAITSPQVDTSTTHLPKKPEKILATPVNFSSPSQSSHKEHHKKIGEVSGDDSSHRSKKSKPLTLREPDGLRMKLILSPNEKSEEESASPQGGPGHSEGASSKKTSKKTGREETESRSSHKKHKKESHTPRSGGTPDSASSTGGELEAGELIIDDSFHEMKKKKKSKKSKKKKDKHKDEKHRKHSKSKREHEGEERPTQIASPVLPSPPPPTATTPTSPPSVPPQALITHAEEQLDKKKKKEDPEKPKKKNMSAYQVFSKEYRGSIIAEHPGIDFGELSKKLAEVWKQLPEKDKLAWKQKAQYLQHKQNKAEATTVKRKSSSSESAARSKGSSSGLPSPNKKSPTSVVSFSTSPAKVPDTEPIDVAAHLQLLGESLSLIGHRLQETEGMVAVSGSLSVLLDSILCALGPLVCLTSHVPQLNACPKQILSNTLDNIAYVMPGL.

3 disordered regions span residues 14–34, 47–368, and 418–468; these read RGMEDVGLAAGRSQREKKRSY, QVRK…SAYQ, and HKQN…SPAK. Polar residues predominate over residues 117-127; that stretch reads TSPQVDTSTTH. The span at 221-230 shows a compositional bias: basic and acidic residues; sequence TGREETESRS. Over residues 242-255 the composition is skewed to polar residues; that stretch reads PRSGGTPDSASSTG. The segment covering 272–300 has biased composition (basic residues); that stretch reads MKKKKKSKKSKKKKDKHKDEKHRKHSKSK. The span at 317 to 335 shows a compositional bias: pro residues; that stretch reads LPSPPPPTATTPTSPPSVP. The segment covering 342-358 has biased composition (basic and acidic residues); it reads HAEEQLDKKKKKEDPEK. The segment at residues 360–428 is a DNA-binding region (HMG box); that stretch reads KKKNMSAYQV…KQNKAEATTV (69 aa). Residues 434 to 466 are compositionally biased toward low complexity; sequence SSESAARSKGSSSGLPSPNKKSPTSVVSFSTSP.

As to quaternary structure, interacts with nlk.2.

It is found in the nucleus. Functionally, negatively regulates Wnt/beta-catenin signaling during development. The protein is HMG box-containing protein 4 (hmgxb4) of Xenopus tropicalis (Western clawed frog).